The following is a 77-amino-acid chain: Acyl carrier protein (77 aa).

One can recognise a Carrier domain in the interval Met-1–Asn-76. An O-(pantetheine 4'-phosphoryl)serine modification is found at Ser-36.

Belongs to the acyl carrier protein (ACP) family. 4'-phosphopantetheine is transferred from CoA to a specific serine of apo-ACP by AcpS. This modification is essential for activity because fatty acids are bound in thioester linkage to the sulfhydryl of the prosthetic group.

It is found in the cytoplasm. Its pathway is lipid metabolism; fatty acid biosynthesis. Its function is as follows. Carrier of the growing fatty acid chain in fatty acid biosynthesis. This Actinobacillus pleuropneumoniae serotype 5b (strain L20) protein is Acyl carrier protein.